A 377-amino-acid chain; its full sequence is Nitric oxide reductase FlRd-NAD(+) reductase (377 aa).

It belongs to the FAD-dependent oxidoreductase family. FAD serves as cofactor.

The protein resides in the cytoplasm. It catalyses the reaction 2 reduced [nitric oxide reductase rubredoxin domain] + NAD(+) + H(+) = 2 oxidized [nitric oxide reductase rubredoxin domain] + NADH. It functions in the pathway nitrogen metabolism; nitric oxide reduction. One of at least two accessory proteins for anaerobic nitric oxide (NO) reductase. Reduces the rubredoxin moiety of NO reductase. The chain is Nitric oxide reductase FlRd-NAD(+) reductase from Salmonella enteritidis PT4 (strain P125109).